We begin with the raw amino-acid sequence, 135 residues long: MAQAFQFELVSPERLLLSAQVTEVVIPGNEGYLTALAGHSPLMTTIMPGVVSVKLADGKTDSYVVFGGFADITPQGCTVLAESATHVDDIDPADIQHRIDHARKVLEDASSNEHRTKAEIFLHQLMTLQGAILPA.

This sequence belongs to the ATPase epsilon chain family. In terms of assembly, F-type ATPases have 2 components, CF(1) - the catalytic core - and CF(0) - the membrane proton channel. CF(1) has five subunits: alpha(3), beta(3), gamma(1), delta(1), epsilon(1). CF(0) has three main subunits: a, b and c.

Its subcellular location is the cell inner membrane. Produces ATP from ADP in the presence of a proton gradient across the membrane. This chain is ATP synthase epsilon chain, found in Brucella suis (strain ATCC 23445 / NCTC 10510).